A 69-amino-acid polypeptide reads, in one-letter code: Large ribosomal subunit protein bL31 (69 aa).

Residues Cys-16, Cys-18, Cys-37, and Cys-40 each contribute to the Zn(2+) site.

It belongs to the bacterial ribosomal protein bL31 family. Type A subfamily. In terms of assembly, part of the 50S ribosomal subunit. Zn(2+) serves as cofactor.

Binds the 23S rRNA. The chain is Large ribosomal subunit protein bL31 from Buchnera aphidicola subsp. Baizongia pistaciae (strain Bp).